A 274-amino-acid chain; its full sequence is Anamorsin homolog (274 aa).

Residues 1 to 154 form an N-terminal SAM-like domain region; sequence MDRTRKQCSV…KKPSWKIGSS (154 aa). A linker region spans residues 154-185; that stretch reads SFALKKSTKGSVKVNLDDDLIDEDSLLTEEDM. The [2Fe-2S] cluster site is built by Cys196, Cys205, Cys208, and Cys210. Residues 196 to 210 form a fe-S binding site A region; the sequence is CEVGSTRKACKNCTC. Positions 235, 238, 246, and 249 each coordinate [4Fe-4S] cluster. 2 short sequence motifs (cx2C motif) span residues 235-238 and 246-249; these read CGSC and CSTC. The segment at 235-249 is fe-S binding site B; it reads CGSCGLGDAFRCSTC.

Belongs to the anamorsin family. Monomer. [2Fe-2S] cluster is required as a cofactor. It depends on [4Fe-4S] cluster as a cofactor.

Its subcellular location is the cytoplasm. It is found in the mitochondrion intermembrane space. Component of the cytosolic iron-sulfur (Fe-S) protein assembly (CIA) machinery. Required for the maturation of extramitochondrial Fe-S proteins. Part of an electron transfer chain functioning in an early step of cytosolic Fe-S biogenesis, facilitating the de novo assembly of a [4Fe-4S] cluster on the cytosolic Fe-S scaffold complex. Electrons are transferred from NADPH via a FAD- and FMN-containing diflavin oxidoreductase. Together with the diflavin oxidoreductase, also required for the assembly of the diferric tyrosyl radical cofactor of ribonucleotide reductase (RNR), probably by providing electrons for reduction during radical cofactor maturation in the catalytic small subunit. The polypeptide is Anamorsin homolog (Ricinus communis (Castor bean)).